We begin with the raw amino-acid sequence, 252 residues long: tRNA pseudouridine synthase A (252 aa).

Residue Asp-51 is the Nucleophile of the active site. Position 105 (Tyr-105) interacts with substrate.

This sequence belongs to the tRNA pseudouridine synthase TruA family.

It carries out the reaction uridine(38/39/40) in tRNA = pseudouridine(38/39/40) in tRNA. Formation of pseudouridine at positions 38, 39 and 40 in the anticodon stem and loop of transfer RNAs. The sequence is that of tRNA pseudouridine synthase A from Thermoplasma acidophilum (strain ATCC 25905 / DSM 1728 / JCM 9062 / NBRC 15155 / AMRC-C165).